Reading from the N-terminus, the 338-residue chain is GTPase Obg (338 aa).

The 159-residue stretch at 1–159 (MSFIDEVKIH…RWLRLELKLM (159 aa)) folds into the Obg domain. The region spanning 160–331 (ADVGLLGMPS…LLDEIARQLW (172 aa)) is the OBG-type G domain. Residues 166–173 (GMPSVGKS), 191–195 (FTTLK), 213–216 (DIPG), 283–286 (NKMD), and 312–314 (SAA) each bind GTP. Mg(2+)-binding residues include Ser-173 and Thr-193.

The protein belongs to the TRAFAC class OBG-HflX-like GTPase superfamily. OBG GTPase family. Monomer. It depends on Mg(2+) as a cofactor.

Its subcellular location is the cytoplasm. An essential GTPase which binds GTP, GDP and possibly (p)ppGpp with moderate affinity, with high nucleotide exchange rates and a fairly low GTP hydrolysis rate. Plays a role in control of the cell cycle, stress response, ribosome biogenesis and in those bacteria that undergo differentiation, in morphogenesis control. The sequence is that of GTPase Obg from Geotalea daltonii (strain DSM 22248 / JCM 15807 / FRC-32) (Geobacter daltonii).